The primary structure comprises 808 residues: Leucine--tRNA ligase (808 aa).

The 'HIGH' region motif lies at P40–H51. The 'KMSKS' region signature appears at K580–S584. Residue K583 participates in ATP binding.

This sequence belongs to the class-I aminoacyl-tRNA synthetase family.

It localises to the cytoplasm. The catalysed reaction is tRNA(Leu) + L-leucine + ATP = L-leucyl-tRNA(Leu) + AMP + diphosphate. The protein is Leucine--tRNA ligase of Leuconostoc mesenteroides subsp. mesenteroides (strain ATCC 8293 / DSM 20343 / BCRC 11652 / CCM 1803 / JCM 6124 / NCDO 523 / NBRC 100496 / NCIMB 8023 / NCTC 12954 / NRRL B-1118 / 37Y).